A 318-amino-acid polypeptide reads, in one-letter code: Replication factor C small subunit (318 aa).

43–50 is a binding site for ATP; the sequence is GSVGTGKT.

Belongs to the activator 1 small subunits family. RfcS subfamily. As to quaternary structure, heteromultimer composed of small subunits (RfcS) and large subunits (RfcL).

In terms of biological role, part of the RFC clamp loader complex which loads the PCNA sliding clamp onto DNA. The chain is Replication factor C small subunit from Thermoplasma acidophilum (strain ATCC 25905 / DSM 1728 / JCM 9062 / NBRC 15155 / AMRC-C165).